The following is a 710-amino-acid chain: Mitochondrial intermediate peptidase (710 aa).

A mitochondrion-targeting transit peptide spans 1-33 (MLLAAGTRYAYRLCGRRAAAALQGRAGRSCARS). K124 carries the post-translational modification N6-acetyllysine. H492 contributes to the Zn(2+) binding site. E493 is an active-site residue. 2 residues coordinate Zn(2+): H496 and H499.

Belongs to the peptidase M3 family. As to quaternary structure, monomer. Zn(2+) serves as cofactor.

It is found in the mitochondrion matrix. The catalysed reaction is Release of an N-terminal octapeptide as second stage of processing of some proteins imported into the mitochondrion.. Its activity is regulated as follows. Activity is divalent cation-dependent. It is stimulated by manganese, magnesium or calcium ions and reversibly inhibited by zinc, cobalt and iron. Functionally, cleaves proteins, imported into the mitochondrion, to their mature size. In Rattus norvegicus (Rat), this protein is Mitochondrial intermediate peptidase (Mipep).